The following is a 409-amino-acid chain: Cdc42 effector protein 1 (409 aa).

A disordered region spans residues Met1–Gly29. A phosphoserine mark is found at Ser19 and Ser27. Thr34 is subject to Phosphothreonine. Residues Ile38 to Gly52 enclose the CRIB domain. Ser39 is subject to Phosphoserine. Arg53 carries the omega-N-methylarginine modification. 6 positions are modified to phosphoserine: Ser65, Ser77, Ser101, Ser113, Ser121, and Ser139. Positions Pro167–Gln189 are enriched in basic and acidic residues. The disordered stretch occupies residues Pro167 to Arg203. Phosphoserine occurs at positions 191, 205, 207, and 210. Repeat copies occupy residues Pro235–Val241, Pro242–Ala248, and Pro255–Ala261. The tract at residues Pro235–Pro284 is 3 X 7 AA tandem repeats of [PT]-[AT]-A-[ENT]-[PT]-[PTS]-[AG]. Disordered regions lie at residues Ala237 to Pro260 and Pro282 to His329. A compositionally biased stretch (pro residues) spans Thr243–Lys258. Positions Pro282 to Ser291 are enriched in low complexity. Phosphoserine is present on residues Ser312, Ser332, Ser368, and Ser371.

The protein belongs to the BORG/CEP family. As to quaternary structure, interacts with RHOQ and CDC42, in a GTP-dependent manner.

Its subcellular location is the endomembrane system. It is found in the cytoplasm. It localises to the cytoskeleton. In terms of biological role, probably involved in the organization of the actin cytoskeleton. Induced membrane extensions in fibroblasts. This chain is Cdc42 effector protein 1 (Cdc42ep1), found in Mus musculus (Mouse).